The sequence spans 240 residues: Probable transcriptional regulatory protein BLi02909/BL01150 (240 aa).

A compositionally biased stretch (basic residues) spans 1–14 (MAGHSKWKNIQRRK). The segment at 1-21 (MAGHSKWKNIQRRKNAQDAKR) is disordered.

This sequence belongs to the TACO1 family.

It is found in the cytoplasm. This is Probable transcriptional regulatory protein BLi02909/BL01150 from Bacillus licheniformis (strain ATCC 14580 / DSM 13 / JCM 2505 / CCUG 7422 / NBRC 12200 / NCIMB 9375 / NCTC 10341 / NRRL NRS-1264 / Gibson 46).